The following is a 103-amino-acid chain: Large ribosomal subunit protein uL24 (103 aa).

It belongs to the universal ribosomal protein uL24 family. As to quaternary structure, part of the 50S ribosomal subunit.

Its function is as follows. One of two assembly initiator proteins, it binds directly to the 5'-end of the 23S rRNA, where it nucleates assembly of the 50S subunit. In terms of biological role, one of the proteins that surrounds the polypeptide exit tunnel on the outside of the subunit. The chain is Large ribosomal subunit protein uL24 from Halalkalibacterium halodurans (strain ATCC BAA-125 / DSM 18197 / FERM 7344 / JCM 9153 / C-125) (Bacillus halodurans).